Consider the following 333-residue polypeptide: MQLLKDKFGRVHDYIRISVTDRCNLRCVYCMPEEGLTFLPHEKVLSKDEIVSFMELMVKFGIKKVRITGGEPLLRTDIVEIVRGLGAIPEIEDISITTNAMYLAKKAEALKEAGLTRVNISLDSLHADRFKAITRGGRLQKVLDGIQKAEEVGLFPIKLNVVLIKGQNDDEITDFLRFTKDKDINIRFIEYMPIGHAGTSWKEKYLPLDTIFEACNEAGYEYEPVDSIRGNGPSENFRIKGAKGTFGVIHPVSAHFCDSCNRLRLTADGYIKACLYWDEEMNIRPFIQDPVKLMQLVQKAIDNKPENHEMALKLQDEVQSNKPTWRRMSQIGG.

The Radical SAM core domain maps to 7–221 (KFGRVHDYIR…FEACNEAGYE (215 aa)). Residue arginine 16 coordinates GTP. [4Fe-4S] cluster-binding residues include cysteine 23 and cysteine 27. Tyrosine 29 lines the S-adenosyl-L-methionine pocket. Position 30 (cysteine 30) interacts with [4Fe-4S] cluster. Residue arginine 66 participates in GTP binding. Glycine 70 is an S-adenosyl-L-methionine binding site. Threonine 97 lines the GTP pocket. Serine 121 lines the S-adenosyl-L-methionine pocket. Lysine 158 serves as a coordination point for GTP. Methionine 192 contacts S-adenosyl-L-methionine. [4Fe-4S] cluster contacts are provided by cysteine 257 and cysteine 260. A GTP-binding site is contributed by 262-264 (RLR). Residue cysteine 274 participates in [4Fe-4S] cluster binding.

The protein belongs to the radical SAM superfamily. MoaA family. Monomer and homodimer. It depends on [4Fe-4S] cluster as a cofactor.

The catalysed reaction is GTP + AH2 + S-adenosyl-L-methionine = (8S)-3',8-cyclo-7,8-dihydroguanosine 5'-triphosphate + 5'-deoxyadenosine + L-methionine + A + H(+). Its pathway is cofactor biosynthesis; molybdopterin biosynthesis. In terms of biological role, catalyzes the cyclization of GTP to (8S)-3',8-cyclo-7,8-dihydroguanosine 5'-triphosphate. The chain is GTP 3',8-cyclase from Listeria monocytogenes serovar 1/2a (strain ATCC BAA-679 / EGD-e).